The following is a 223-amino-acid chain: Uracil-DNA glycosylase (223 aa).

Catalysis depends on D67, which acts as the Proton acceptor.

Belongs to the uracil-DNA glycosylase (UDG) superfamily. UNG family.

Its subcellular location is the cytoplasm. The catalysed reaction is Hydrolyzes single-stranded DNA or mismatched double-stranded DNA and polynucleotides, releasing free uracil.. Excises uracil residues from the DNA which can arise as a result of misincorporation of dUMP residues by DNA polymerase or due to deamination of cytosine. The protein is Uracil-DNA glycosylase of Borrelia duttonii (strain Ly).